We begin with the raw amino-acid sequence, 247 residues long: UPF0612 protein P20C8.01c (247 aa).

Coiled coils occupy residues 27 to 63 and 138 to 225; these read IKRYERSVDSTLLEIDENKREALEKYIEERDRKMKYE and DTVQ…DARS.

Belongs to the UPF0612 family.

The protein localises to the cytoplasm. The sequence is that of UPF0612 protein P20C8.01c from Schizosaccharomyces pombe (strain 972 / ATCC 24843) (Fission yeast).